Here is a 653-residue protein sequence, read N- to C-terminus: Chaperone protein DnaK (653 aa).

Phosphothreonine; by autocatalysis is present on Thr200. The tract at residues 612–653 (QGAAGAAGAAGGAGAAAGAEAAGASQQADDVVDAEFKEVKKD) is disordered. Residues 627-639 (AAGAEAAGASQQA) are compositionally biased toward low complexity.

This sequence belongs to the heat shock protein 70 family.

Its function is as follows. Acts as a chaperone. In Paraburkholderia phymatum (strain DSM 17167 / CIP 108236 / LMG 21445 / STM815) (Burkholderia phymatum), this protein is Chaperone protein DnaK.